Reading from the N-terminus, the 125-residue chain is Salivary protein 15 Ipac-1 (125 aa).

The first 15 residues, 1 to 15 (MKVVCIILLFGIAAA), serve as a signal peptide directing secretion. Asparagine 82 and asparagine 94 each carry an N-linked (GlcNAc...) asparagine glycan. Residues 106–125 (GPSGQTCADKSKCVGHIPGC) are CD4-binding.

It belongs to the salp15 family. In terms of assembly, interacts with host CD4. Interacts with host DC-SIGN (CD209). Interacts with Borrelia outer surface protein C (OspC). As to expression, expressed in salivary glands.

The protein localises to the secreted. Salivary tick protein that downregulates host immune system by binding to both dendritic cells, and CD4(+) T cells. Specifically binds to the CD4 coreceptor on T cells. This interaction prevents the activation of the Src kinase, Lck, and its downstream substrate Zap-70, and results in deficient activation of PLCgamma1, the repression of calcium fluxes triggered by T-cell antigen receptor (TCR) ligation, and a subsequent reduction in interleukin-2 production. This salivary protein also binds to DC-SIGN (CD209) on dendritic cells (DC) and activates the Raf-1 kinase/MEK signaling pathway that results in down-regulating expression of pro-inflammatory cytokines. Furthermore, it inhibits T cell proliferation induced by DCs. It also inhibits in vitro keratinocyte inflammation induced by Borrelia burgdorferi or by the major outer surface protein (OspC) of Borrelia. In addition, it downregulates chemokines and monocyte chemoattractant protein 1, as well as several antimicrobial peptides such as defensins, cathelicidin, psoriasin, and RNase 7. Apart from its immunomodulatory activities, it is also associated with protection of Borrelia spirochetes from antibody-mediated killing through its binding to OspC. In vivo, tests on different immune disease animal models show promising therapeutic results, e.g., in inhibiting HIV infection, experimental autoimmune encephalomyelitis, transplantation rejection, and asthma. The protein is Salivary protein 15 Ipac-1 of Ixodes pacificus (Western black-legged tick).